We begin with the raw amino-acid sequence, 241 residues long: tRNA (guanine-N(1)-)-methyltransferase (241 aa).

Residues Gly-108 and 127–132 each bind S-adenosyl-L-methionine; that span reads LGDYVL.

The protein belongs to the RNA methyltransferase TrmD family. As to quaternary structure, homodimer.

It is found in the cytoplasm. It catalyses the reaction guanosine(37) in tRNA + S-adenosyl-L-methionine = N(1)-methylguanosine(37) in tRNA + S-adenosyl-L-homocysteine + H(+). Functionally, specifically methylates guanosine-37 in various tRNAs. This Streptococcus suis (strain 98HAH33) protein is tRNA (guanine-N(1)-)-methyltransferase.